Consider the following 506-residue polypeptide: Cobyric acid synthase (506 aa).

One can recognise a GATase cobBQ-type domain in the interval 251–448 (DITIAIVQLP…LHGLFDSDAF (198 aa)). The Nucleophile role is filled by C332. The active site involves H440.

The protein belongs to the CobB/CobQ family. CobQ subfamily.

Its pathway is cofactor biosynthesis; adenosylcobalamin biosynthesis. Its function is as follows. Catalyzes amidations at positions B, D, E, and G on adenosylcobyrinic A,C-diamide. NH(2) groups are provided by glutamine, and one molecule of ATP is hydrogenolyzed for each amidation. The protein is Cobyric acid synthase of Salmonella heidelberg (strain SL476).